The chain runs to 643 residues: Threonine--tRNA ligase (643 aa).

The TGS domain occupies 1 to 61 (MIKVSLKDGS…NEDVSLSICT (61 aa)). The catalytic stretch occupies residues 240–540 (DHNKLGRELK…LIEKYAGAFP (301 aa)). Residues C335, H386, and H517 each contribute to the Zn(2+) site.

The protein belongs to the class-II aminoacyl-tRNA synthetase family. As to quaternary structure, homodimer. Requires Zn(2+) as cofactor.

The protein resides in the cytoplasm. The catalysed reaction is tRNA(Thr) + L-threonine + ATP = L-threonyl-tRNA(Thr) + AMP + diphosphate + H(+). Its function is as follows. Catalyzes the attachment of threonine to tRNA(Thr) in a two-step reaction: L-threonine is first activated by ATP to form Thr-AMP and then transferred to the acceptor end of tRNA(Thr). Also edits incorrectly charged L-seryl-tRNA(Thr). This Clostridium botulinum (strain Alaska E43 / Type E3) protein is Threonine--tRNA ligase.